We begin with the raw amino-acid sequence, 316 residues long: Lipoyl synthase (316 aa).

Cys66, Cys71, Cys77, Cys92, Cys96, Cys99, and Ser306 together coordinate [4Fe-4S] cluster. The Radical SAM core domain maps to 78 to 295 (FNRGTATFMI…NLIAFDLGFK (218 aa)).

Belongs to the radical SAM superfamily. Lipoyl synthase family. Requires [4Fe-4S] cluster as cofactor.

The protein resides in the cytoplasm. It carries out the reaction [[Fe-S] cluster scaffold protein carrying a second [4Fe-4S](2+) cluster] + N(6)-octanoyl-L-lysyl-[protein] + 2 oxidized [2Fe-2S]-[ferredoxin] + 2 S-adenosyl-L-methionine + 4 H(+) = [[Fe-S] cluster scaffold protein] + N(6)-[(R)-dihydrolipoyl]-L-lysyl-[protein] + 4 Fe(3+) + 2 hydrogen sulfide + 2 5'-deoxyadenosine + 2 L-methionine + 2 reduced [2Fe-2S]-[ferredoxin]. It functions in the pathway protein modification; protein lipoylation via endogenous pathway; protein N(6)-(lipoyl)lysine from octanoyl-[acyl-carrier-protein]: step 2/2. Functionally, catalyzes the radical-mediated insertion of two sulfur atoms into the C-6 and C-8 positions of the octanoyl moiety bound to the lipoyl domains of lipoate-dependent enzymes, thereby converting the octanoylated domains into lipoylated derivatives. The polypeptide is Lipoyl synthase (Wigglesworthia glossinidia brevipalpis).